A 346-amino-acid polypeptide reads, in one-letter code: Biotin synthase (346 aa).

In terms of domain architecture, Radical SAM core spans 38 to 256 (RQVQVSTLLS…IAVARIMMPT (219 aa)). Residues Cys-53, Cys-57, and Cys-60 each contribute to the [4Fe-4S] cluster site. [2Fe-2S] cluster contacts are provided by Cys-97, Cys-128, Cys-188, and Arg-260.

This sequence belongs to the radical SAM superfamily. Biotin synthase family. In terms of assembly, homodimer. [4Fe-4S] cluster serves as cofactor. [2Fe-2S] cluster is required as a cofactor.

It carries out the reaction (4R,5S)-dethiobiotin + (sulfur carrier)-SH + 2 reduced [2Fe-2S]-[ferredoxin] + 2 S-adenosyl-L-methionine = (sulfur carrier)-H + biotin + 2 5'-deoxyadenosine + 2 L-methionine + 2 oxidized [2Fe-2S]-[ferredoxin]. The protein operates within cofactor biosynthesis; biotin biosynthesis; biotin from 7,8-diaminononanoate: step 2/2. Functionally, catalyzes the conversion of dethiobiotin (DTB) to biotin by the insertion of a sulfur atom into dethiobiotin via a radical-based mechanism. The chain is Biotin synthase from Escherichia coli O6:H1 (strain CFT073 / ATCC 700928 / UPEC).